The following is a 122-amino-acid chain: Small ribosomal subunit protein uS13 (122 aa).

The disordered stretch occupies residues 99–122 (RGQRTHTNARTRKGPAKAIAGKKK).

It belongs to the universal ribosomal protein uS13 family. Part of the 30S ribosomal subunit. Forms a loose heterodimer with protein S19. Forms two bridges to the 50S subunit in the 70S ribosome.

Located at the top of the head of the 30S subunit, it contacts several helices of the 16S rRNA. In the 70S ribosome it contacts the 23S rRNA (bridge B1a) and protein L5 of the 50S subunit (bridge B1b), connecting the 2 subunits; these bridges are implicated in subunit movement. Contacts the tRNAs in the A and P-sites. The sequence is that of Small ribosomal subunit protein uS13 from Parvibaculum lavamentivorans (strain DS-1 / DSM 13023 / NCIMB 13966).